Consider the following 138-residue polypeptide: Cysteine desulfuration protein SufE (138 aa).

The active-site Cysteine persulfide intermediate is C51.

This sequence belongs to the SufE family. As to quaternary structure, homodimer. Interacts with SufS.

It is found in the cytoplasm. Its pathway is cofactor biosynthesis; iron-sulfur cluster biosynthesis. Functionally, participates in cysteine desulfuration mediated by SufS. Cysteine desulfuration mobilizes sulfur from L-cysteine to yield L-alanine and constitutes an essential step in sulfur metabolism for biosynthesis of a variety of sulfur-containing biomolecules. Functions as a sulfur acceptor for SufS, by mediating the direct transfer of the sulfur atom from the S-sulfanylcysteine of SufS, an intermediate product of cysteine desulfuration process. The chain is Cysteine desulfuration protein SufE from Salmonella choleraesuis (strain SC-B67).